The primary structure comprises 279 residues: Tryptophan synthase alpha chain (279 aa).

Active-site proton acceptor residues include glutamate 50 and aspartate 61.

This sequence belongs to the TrpA family. As to quaternary structure, tetramer of two alpha and two beta chains.

It carries out the reaction (1S,2R)-1-C-(indol-3-yl)glycerol 3-phosphate + L-serine = D-glyceraldehyde 3-phosphate + L-tryptophan + H2O. It participates in amino-acid biosynthesis; L-tryptophan biosynthesis; L-tryptophan from chorismate: step 5/5. In terms of biological role, the alpha subunit is responsible for the aldol cleavage of indoleglycerol phosphate to indole and glyceraldehyde 3-phosphate. The chain is Tryptophan synthase alpha chain from Rhizobium etli (strain ATCC 51251 / DSM 11541 / JCM 21823 / NBRC 15573 / CFN 42).